The chain runs to 297 residues: uncharacterized protein (297 aa).

3 disordered regions span residues 19 to 133 (NEVD…EEKE), 147 to 214 (AEDD…VGIA), and 226 to 277 (EKTS…SKEA). Over residues 41–52 (EEPKNEKEKHDD) the composition is skewed to basic and acidic residues. The span at 77–87 (PAEDDEEDEEF) shows a compositional bias: acidic residues. Positions 88–101 (PSQSYGPSIPSNFR) are enriched in polar residues. Composition is skewed to basic and acidic residues over residues 147–161 (AEDD…REEW) and 236–268 (IHQK…EVRG).

This is an uncharacterized protein from Caenorhabditis elegans.